The primary structure comprises 476 residues: Eukaryotic translation initiation factor 3 subunit L (476 aa).

The PCI domain occupies 257-452 (DAIRMFSHIL…DLDYALENDL (196 aa)).

It belongs to the eIF-3 subunit L family. As to quaternary structure, component of the eukaryotic translation initiation factor 3 (eIF-3) complex.

The protein localises to the cytoplasm. In terms of biological role, component of the eukaryotic translation initiation factor 3 (eIF-3) complex, which is involved in protein synthesis of a specialized repertoire of mRNAs and, together with other initiation factors, stimulates binding of mRNA and methionyl-tRNAi to the 40S ribosome. The eIF-3 complex specifically targets and initiates translation of a subset of mRNAs involved in cell proliferation. This chain is Eukaryotic translation initiation factor 3 subunit L, found in Aspergillus fumigatus (strain CBS 144.89 / FGSC A1163 / CEA10) (Neosartorya fumigata).